Here is a 185-residue protein sequence, read N- to C-terminus: Elongation factor P (185 aa).

The protein belongs to the elongation factor P family.

The protein resides in the cytoplasm. Its pathway is protein biosynthesis; polypeptide chain elongation. Involved in peptide bond synthesis. Stimulates efficient translation and peptide-bond synthesis on native or reconstituted 70S ribosomes in vitro. Probably functions indirectly by altering the affinity of the ribosome for aminoacyl-tRNA, thus increasing their reactivity as acceptors for peptidyl transferase. In Burkholderia mallei (strain NCTC 10247), this protein is Elongation factor P.